The primary structure comprises 101 residues: MIPGELLIDDGEHELNAGRATVTVVVSNTGDRPVQIGSHYHFYEVNDALAFDRAAARGFRLNIAAGTAVRFEPGQERTVELVELAGDRIVYGFNGKVMGKL.

The protein belongs to the urease beta subunit family. In terms of assembly, heterotrimer of UreA (gamma), UreB (beta) and UreC (alpha) subunits. Three heterotrimers associate to form the active enzyme.

It is found in the cytoplasm. The enzyme catalyses urea + 2 H2O + H(+) = hydrogencarbonate + 2 NH4(+). Its pathway is nitrogen metabolism; urea degradation; CO(2) and NH(3) from urea (urease route): step 1/1. This Paraburkholderia xenovorans (strain LB400) protein is Urease subunit beta.